Reading from the N-terminus, the 1070-residue chain is MFRGGNEGMSTIPGFNQIQFEGFCRFIDQGLTEELYKFPKIEDTDQEIEFQLFVETYQLVEPLIKERDAVYESLTYSSELYVSAGLIWKTSRDMQEQTIFIGNIPLMNSLGTSIVNGLYRIVINQILQSPGIYYRSELDHNGISVYTGTIVSDWGGRLELEIDRKARIWARVSRKQKISILVLSSAMGSNLREILENVCYPEIFLSFLNDKEKKKIGSKESAILEFYQQFACVGGDPVFSESLCKELQKKFFQQRCELGRIGRRNINRRLNLDIPQNNTFLLPQDILAAADHLIGMKFGMGILDDMNHLKNKRIRSVADLLQDQFGLALIRLENVVRGTICGAIRHKLIPTPQNLVTSTPVTTTYESFFGLHPLSQVLDRTNPLTQIVHGRKSSYLGPGGLTGRTASFRIRDIHPSHYGRICPIDTSEGINVGLIGSLAIHARIGHWGSLESPFYEISERSKKVRMLYLSPSRDEYYMVAAGNSLALNQGIQEEQVVPARYRQEFLTIAWEQVHLRSIFPFQYFSIGASLIPFIEHNDANRALMSSNMQRQAVPLSRSEKCIVGTGLERQAALDSGVPVIAEHEGKIVYTDTDKIILSGNGDTLSIPLVMYQRSNKNTCMHQKAQVRRGKCIKKGQILADGAATVGGELALGKNVLVAYMPWEGYNSEDAVLISERLVYGDIYTSFHIRKYEIQTHVTSQGPERITNKIPHLEAHLLRNLDKNGIVILGSWVETGDILVGKLTPQMAKESSYAPEDRLLRAILGIQVSTSKETCLKLPIGGRGRVIDVRWIQKKGGSSYNPETIRVYISQKREIKVGDKVAGRHGNKGIISKILPRQDMPYLQDGRPVDMVFNPLGVPSRMNVGQIFECSLGLAGGLLDRHYRIAPFDEKYEQEASRKLVFSELYEASKQTANPWVFEPEYPGKSRIFDGRTGDPFEQPVIIGKPYILKLIHQVDDKIHGRSSGHYALVTQQPLRGRAKQGGQRVGEMEVWALEGFGVAHILQEMLTYKSDHIRARQEVLGTTIIGGTIPNPEDAPESFRLLVRELRSLALELNHFLVSEKNFQINRKEA.

The protein belongs to the RNA polymerase beta chain family. As to quaternary structure, in plastids the minimal PEP RNA polymerase catalytic core is composed of four subunits: alpha, beta, beta', and beta''. When a (nuclear-encoded) sigma factor is associated with the core the holoenzyme is formed, which can initiate transcription.

The protein resides in the plastid. It is found in the chloroplast. The enzyme catalyses RNA(n) + a ribonucleoside 5'-triphosphate = RNA(n+1) + diphosphate. DNA-dependent RNA polymerase catalyzes the transcription of DNA into RNA using the four ribonucleoside triphosphates as substrates. The chain is DNA-directed RNA polymerase subunit beta from Vitis vinifera (Grape).